The following is a 108-amino-acid chain: Parvalbumin beta (108 aa).

2 EF-hand domains span residues 38–73 and 77–108; these read KSTD…FSST and LTAA…LVKA. Ca(2+) contacts are provided by Asp-51, Asp-53, Ser-55, Phe-57, Glu-59, Glu-62, Asp-90, Asp-92, Asp-94, Lys-96, and Glu-101.

The protein belongs to the parvalbumin family.

In muscle, parvalbumin is thought to be involved in relaxation after contraction. It binds two calcium ions. The sequence is that of Parvalbumin beta from Graptemys geographica (Common map turtle).